We begin with the raw amino-acid sequence, 984 residues long: Putative formate dehydrogenase SH0748 (984 aa).

The 77-residue stretch at 3–79 folds into the 2Fe-2S ferredoxin-type domain; the sequence is EHLIVTLDGT…PMTVNTQNND (77 aa). [2Fe-2S] cluster contacts are provided by Cys37, Cys48, Cys51, and Cys63. Positions 79–119 constitute a 4Fe-4S His(Cys)3-ligated-type domain; the sequence is DVKASQKEALDRILEKHMLYCTVCDYNNGDCEIHNAMDAWG. Residues His95, Cys99, Cys102, Cys109, Cys147, Cys150, Cys153, Cys157, Cys190, Cys193, Cys196, Cys200, Cys264, Cys267, Cys271, and Cys299 each contribute to the [4Fe-4S] cluster site. 4Fe-4S ferredoxin-type domains lie at 138–165 and 181–211; these read PFYR…VNET and NDVP…VNME. A formate dehydrogenase region spans residues 252–984; sequence MRKERIKKTK…YVFPGNVVDK (733 aa). The 57-residue stretch at 257–313 folds into the 4Fe-4S Mo/W bis-MGD-type domain; the sequence is IKKTKTVCTYCGVGCSFDVWTKDREVLKVQPSHDSPANKIATCVKGKFSWGHINSDQ.

In the C-terminal section; belongs to the prokaryotic molybdopterin-containing oxidoreductase family. [2Fe-2S] cluster is required as a cofactor. [4Fe-4S] cluster serves as cofactor. The cofactor is Mo-bis(molybdopterin guanine dinucleotide).

The catalysed reaction is formate + NAD(+) = CO2 + NADH. This Staphylococcus haemolyticus (strain JCSC1435) protein is Putative formate dehydrogenase SH0748.